Consider the following 225-residue polypeptide: UPF0758 protein BP1235 (225 aa).

In terms of domain architecture, MPN spans 103–225; it reads ALANPDLVRR…TVSMAAQGHL (123 aa). The Zn(2+) site is built by His-174, His-176, and Asp-187. The JAMM motif signature appears at 174-187; that stretch reads HNHPGGTAAASAAD.

This sequence belongs to the UPF0758 family.

The protein is UPF0758 protein BP1235 of Bordetella pertussis (strain Tohama I / ATCC BAA-589 / NCTC 13251).